The sequence spans 295 residues: Phosphoribosylaminoimidazole-succinocarboxamide synthase (295 aa).

It belongs to the SAICAR synthetase family.

It carries out the reaction 5-amino-1-(5-phospho-D-ribosyl)imidazole-4-carboxylate + L-aspartate + ATP = (2S)-2-[5-amino-1-(5-phospho-beta-D-ribosyl)imidazole-4-carboxamido]succinate + ADP + phosphate + 2 H(+). It functions in the pathway purine metabolism; IMP biosynthesis via de novo pathway; 5-amino-1-(5-phospho-D-ribosyl)imidazole-4-carboxamide from 5-amino-1-(5-phospho-D-ribosyl)imidazole-4-carboxylate: step 1/2. The polypeptide is Phosphoribosylaminoimidazole-succinocarboxamide synthase (Nitrosomonas europaea (strain ATCC 19718 / CIP 103999 / KCTC 2705 / NBRC 14298)).